The sequence spans 258 residues: Imidazole glycerol phosphate synthase subunit HisF (258 aa).

Residues Asp-11 and Asp-130 contribute to the active site.

The protein belongs to the HisA/HisF family. As to quaternary structure, heterodimer of HisH and HisF.

It is found in the cytoplasm. The catalysed reaction is 5-[(5-phospho-1-deoxy-D-ribulos-1-ylimino)methylamino]-1-(5-phospho-beta-D-ribosyl)imidazole-4-carboxamide + L-glutamine = D-erythro-1-(imidazol-4-yl)glycerol 3-phosphate + 5-amino-1-(5-phospho-beta-D-ribosyl)imidazole-4-carboxamide + L-glutamate + H(+). The protein operates within amino-acid biosynthesis; L-histidine biosynthesis; L-histidine from 5-phospho-alpha-D-ribose 1-diphosphate: step 5/9. In terms of biological role, IGPS catalyzes the conversion of PRFAR and glutamine to IGP, AICAR and glutamate. The HisF subunit catalyzes the cyclization activity that produces IGP and AICAR from PRFAR using the ammonia provided by the HisH subunit. The chain is Imidazole glycerol phosphate synthase subunit HisF from Bradyrhizobium sp. (strain BTAi1 / ATCC BAA-1182).